We begin with the raw amino-acid sequence, 318 residues long: Aspartate carbamoyltransferase catalytic subunit (318 aa).

R59 and T60 together coordinate carbamoyl phosphate. L-aspartate is bound at residue K87. Positions 109, 137, and 140 each coordinate carbamoyl phosphate. L-aspartate is bound by residues R170 and R224. Carbamoyl phosphate contacts are provided by G265 and P266.

Belongs to the aspartate/ornithine carbamoyltransferase superfamily. ATCase family. In terms of assembly, heterododecamer (2C3:3R2) of six catalytic PyrB chains organized as two trimers (C3), and six regulatory PyrI chains organized as three dimers (R2).

It catalyses the reaction carbamoyl phosphate + L-aspartate = N-carbamoyl-L-aspartate + phosphate + H(+). It functions in the pathway pyrimidine metabolism; UMP biosynthesis via de novo pathway; (S)-dihydroorotate from bicarbonate: step 2/3. Functionally, catalyzes the condensation of carbamoyl phosphate and aspartate to form carbamoyl aspartate and inorganic phosphate, the committed step in the de novo pyrimidine nucleotide biosynthesis pathway. This Rhizobium rhizogenes (strain K84 / ATCC BAA-868) (Agrobacterium radiobacter) protein is Aspartate carbamoyltransferase catalytic subunit.